The chain runs to 198 residues: MFEGPRRYRRPRTRFLSKQLTALRELLEKTMHPSLATMGKLASKLQLDLSVVKIWFKNQRAKWKRQQRQQMQTRPSLGPANQTTSVKKEETPSAITTANIRPVSPGISDANDHDLREPSGIKNPGGASASARVSSWDSQSYDIEQICLGASNPPWASTLFEIDEFVKIYDLPGEDDTSSLNQYLFPVCLEYDQLQSSV.

Positions 33–67 (PSLATMGKLASKLQLDLSVVKIWFKNQRAKWKRQQ) form a DNA-binding region, homeobox. Residues 65-133 (RQQRQQMQTR…PGGASASARV (69 aa)) are disordered. The tract at residues 79–190 (PANQTTSVKK…NQYLFPVCLE (112 aa)) is LEUTX region. Residues 110-119 (ANDHDLREPS) show a composition bias toward basic and acidic residues. 4 short sequence motifs (9aaTAD) span residues 125-136 (GGASASARVSSW), 153-161 (PPWASTLFE), 163-171 (DEFVKIYDL), and 178-186 (SSLNQYLFP).

It belongs to the paired homeobox family.

Its subcellular location is the nucleus. Paired-like homeobox transcription factor involved in embryogenesis. May act as a regulator of embryo genome activation. Binds to a 36 bp DNA elements containing a 5'-TAATCC-3' sequence motif, referred to as EEA motif (EGA-enriched Alu-motif), present in the promoters of target genes activated in early embryos. In terms of biological role, inactive transcriptional activity. The polypeptide is Paired-like homeodomain transcription factor LEUTX (Homo sapiens (Human)).